Consider the following 1106-residue polypeptide: MEEQLIQAVEIASNPLANAGPDVTSQALQFLEHLKTITHESWSVGWSVWSARNPQDNGPKYSQNARMFGLMLVDDFLANRISLSTDPAAAVATLQQSAVEYIQNEYVAGSGDASVAYIKNKFAQVLAVLLLQTYNLPPPYTLLPTLLSMIRAHPAASPSQQSTLQLPINPLTTDLVLRVLHDLSVTLGSDVTLRAVRSKERLQRDAVIRDEIRANHASNIADSVWRIVEEGFNRVNQGEHASNPNSASGVRSMNFTNAVDLTAAATKIVEDYVSWIDINLVVTNQTVPLLFNVLHHPIPKIRTAAADALHGIVSKGMKPADKLSLAQALNLPQVITPLESRTRTGPSAQNGQSDTSDSNIEFREHLAHLTNGLVLEMCKILEESAAEESTRAAAEDLLNSLLPLVLAFLSDEYDDASEQTFSGVNMILSIYKKARRRGAELTGARAEFLSNLIGVALQKMRFDDEAEWPAGSFGAAEDDDDDDDEEDAKFLEMRRSLQTIVGAIAAIDDKLFSTSVAQLVLSTFASFETSSSDSDGQISWQQIELALYVIHFYGDVMTTATAAPKVGLSPAMFVQSPEAGSKGRAPKLGNEALAGLPLSNLGEMVQKLVQSNVSSFPHPAVQLQFFECLVRYSNFFAARSGCVLDALPAFLDWRGVHHEKLGVCKRVNYLLYRFVRDLRAVAAVPMDYVERLLQGLQDLLVVRAELPQVDADEDPLIKATAPAGYFDSQLYLFETSGILVSLLNNAPNDQVVLLKAISEPLSEQMRQAVQAFQRNPTDLTSVLQVHHLMLALSSLSKGFPDLSPTSTQPEPQWVGVFKSITEQVLVSIGAMNSFSVVREAARGAFARMVSTCGKAVLPYIPGLIDALLSEVTSAELVDFVNFLSLVVNKYKDDVRSIVDQLLLILVERIFFFLNQGVTGTDDAVEKSELQKAYMNLLSSMVQSGMESVFVSDKNVGQLETVLQSVVFYSTNSDAACQRTAFSILHRLVASWAGSSAVNGSTEATLPGFERFIYEHLVPLIFEAPAKDTFDFKDAQSQIVLTEISTLAKTIFQKRGDEMIQFLLEVYLPGINCPPQLAQDFTTNLTTLDSKAFKKYLDAFITRSRGG.

The disordered stretch occupies residues 336–357 (TPLESRTRTGPSAQNGQSDTSD). Over residues 343-357 (RTGPSAQNGQSDTSD) the composition is skewed to polar residues.

It belongs to the exportin family.

It localises to the nucleus. Its subcellular location is the cytoplasm. Functionally, tRNA nucleus export receptor which facilitates tRNA translocation across the nuclear pore complex. Involved in pre-tRNA splicing, probably by affecting the interaction of pre-tRNA with splicing endonuclease. The sequence is that of Exportin-T (LOS1) from Mycosarcoma maydis (Corn smut fungus).